Reading from the N-terminus, the 248-residue chain is Carboxy-S-adenosyl-L-methionine synthase (248 aa).

S-adenosyl-L-methionine contacts are provided by residues Y40, 65–67, 95–96, 123–124, N138, and R205; these read GCS, DN, and DI.

The protein belongs to the class I-like SAM-binding methyltransferase superfamily. Cx-SAM synthase family. As to quaternary structure, homodimer.

It carries out the reaction prephenate + S-adenosyl-L-methionine = carboxy-S-adenosyl-L-methionine + 3-phenylpyruvate + H2O. Its function is as follows. Catalyzes the conversion of S-adenosyl-L-methionine (SAM) to carboxy-S-adenosyl-L-methionine (Cx-SAM). The sequence is that of Carboxy-S-adenosyl-L-methionine synthase from Hahella chejuensis (strain KCTC 2396).